Reading from the N-terminus, the 308-residue chain is U-box domain-containing protein 54 (308 aa).

Residues 172–235 are disordered; sequence FSEFSTSAEK…NESDEDPRLE (64 aa). Residues 210–227 are compositionally biased toward basic and acidic residues; the sequence is ESPKKGRKETIEKSKSNE. One can recognise a U-box domain in the interval 232–306; sequence PRLEDFKCPI…KDWLEKNPNY (75 aa).

It carries out the reaction S-ubiquitinyl-[E2 ubiquitin-conjugating enzyme]-L-cysteine + [acceptor protein]-L-lysine = [E2 ubiquitin-conjugating enzyme]-L-cysteine + N(6)-ubiquitinyl-[acceptor protein]-L-lysine.. It participates in protein modification; protein ubiquitination. Its function is as follows. Functions as an E3 ubiquitin ligase. The protein is U-box domain-containing protein 54 (PUB54) of Arabidopsis thaliana (Mouse-ear cress).